The following is an 85-amino-acid chain: UPF0291 protein SPH_1589 (85 aa).

Residues 62-85 (TPEKLRQVQREKGLHGRSLDDPNS) are disordered.

The protein belongs to the UPF0291 family.

The protein resides in the cytoplasm. This is UPF0291 protein SPH_1589 from Streptococcus pneumoniae (strain Hungary19A-6).